A 291-amino-acid chain; its full sequence is 4-hydroxy-tetrahydrodipicolinate synthase (291 aa).

A pyruvate-binding site is contributed by Thr-47. Catalysis depends on Tyr-134, which acts as the Proton donor/acceptor. Lys-162 functions as the Schiff-base intermediate with substrate in the catalytic mechanism. Pyruvate is bound at residue Ile-205.

The protein belongs to the DapA family. In terms of assembly, homotetramer; dimer of dimers.

It localises to the cytoplasm. The enzyme catalyses L-aspartate 4-semialdehyde + pyruvate = (2S,4S)-4-hydroxy-2,3,4,5-tetrahydrodipicolinate + H2O + H(+). The protein operates within amino-acid biosynthesis; L-lysine biosynthesis via DAP pathway; (S)-tetrahydrodipicolinate from L-aspartate: step 3/4. Functionally, catalyzes the condensation of (S)-aspartate-beta-semialdehyde [(S)-ASA] and pyruvate to 4-hydroxy-tetrahydrodipicolinate (HTPA). The polypeptide is 4-hydroxy-tetrahydrodipicolinate synthase (Methanospirillum hungatei JF-1 (strain ATCC 27890 / DSM 864 / NBRC 100397 / JF-1)).